We begin with the raw amino-acid sequence, 1391 residues long: DNA-directed RNA polymerase subunit beta' (1391 aa).

Zn(2+) is bound by residues Cys72, Cys74, Cys87, and Cys90. Mg(2+) is bound by residues Asp462, Asp464, and Asp466. Zn(2+) is bound by residues Cys816, Cys890, Cys897, and Cys900.

It belongs to the RNA polymerase beta' chain family. In terms of assembly, the RNAP catalytic core consists of 2 alpha, 1 beta, 1 beta' and 1 omega subunit. When a sigma factor is associated with the core the holoenzyme is formed, which can initiate transcription. Requires Mg(2+) as cofactor. It depends on Zn(2+) as a cofactor.

It carries out the reaction RNA(n) + a ribonucleoside 5'-triphosphate = RNA(n+1) + diphosphate. Its function is as follows. DNA-dependent RNA polymerase catalyzes the transcription of DNA into RNA using the four ribonucleoside triphosphates as substrates. This is DNA-directed RNA polymerase subunit beta' from Neisseria meningitidis serogroup B (strain ATCC BAA-335 / MC58).